Reading from the N-terminus, the 191-residue chain is MPGAIDDHCPAQPGEEGTAFNVTMGYKYPPLCLGHATRCIHLETQVWAAYLLERLATGKWGHLVSGLSLCPLRQMKRGVIGDTPYFQYKPVGKLCPKNFEGPSKTLIWGDCVNSHAVVLKNDSYALVIDWAPKGYLKNTCSSGGGEFLEATYFISYWEDEDHHPTLHRWFGSFFTLKWEDKDITLHPQGLV.

A truncated surface protein region spans residues 1-191 (MPGAIDDHCP…DITLHPQGLV (191 aa)).

This sequence belongs to the beta type-B retroviral envelope protein family. HERV class-II K(HML-8) env subfamily. Cerebellum and testis.

It is found in the virion. Its function is as follows. Retroviral envelope proteins mediate receptor recognition and membrane fusion during early infection. Endogenous envelope proteins may have kept, lost or modified their original function during evolution. The chain is Putative endogenous retrovirus group K member 11-1 Env polyprotein (ERVK11-1) from Homo sapiens (Human).